A 427-amino-acid polypeptide reads, in one-letter code: Enolase (427 aa).

Residue Gln163 coordinates (2R)-2-phosphoglycerate. Glu205 functions as the Proton donor in the catalytic mechanism. Positions 242, 285, and 312 each coordinate Mg(2+). Lys337, Arg366, Ser367, and Lys388 together coordinate (2R)-2-phosphoglycerate. Lys337 (proton acceptor) is an active-site residue.

Belongs to the enolase family. Mg(2+) is required as a cofactor.

It is found in the cytoplasm. The protein localises to the secreted. It localises to the cell surface. It catalyses the reaction (2R)-2-phosphoglycerate = phosphoenolpyruvate + H2O. The protein operates within carbohydrate degradation; glycolysis; pyruvate from D-glyceraldehyde 3-phosphate: step 4/5. In terms of biological role, catalyzes the reversible conversion of 2-phosphoglycerate (2-PG) into phosphoenolpyruvate (PEP). It is essential for the degradation of carbohydrates via glycolysis. The polypeptide is Enolase (Burkholderia ambifaria (strain MC40-6)).